The chain runs to 184 residues: Protein GrpE (184 aa).

It belongs to the GrpE family. Homodimer.

The protein localises to the cytoplasm. In terms of biological role, participates actively in the response to hyperosmotic and heat shock by preventing the aggregation of stress-denatured proteins, in association with DnaK and GrpE. It is the nucleotide exchange factor for DnaK and may function as a thermosensor. Unfolded proteins bind initially to DnaJ; upon interaction with the DnaJ-bound protein, DnaK hydrolyzes its bound ATP, resulting in the formation of a stable complex. GrpE releases ADP from DnaK; ATP binding to DnaK triggers the release of the substrate protein, thus completing the reaction cycle. Several rounds of ATP-dependent interactions between DnaJ, DnaK and GrpE are required for fully efficient folding. In Pseudomonas putida (strain GB-1), this protein is Protein GrpE.